Here is a 425-residue protein sequence, read N- to C-terminus: 3-phosphoshikimate 1-carboxyvinyltransferase (425 aa).

Lys-21, Ser-22, and Arg-26 together coordinate 3-phosphoshikimate. A phosphoenolpyruvate-binding site is contributed by Lys-21. Phosphoenolpyruvate-binding residues include Gly-91 and Arg-119. The 3-phosphoshikimate site is built by Ser-164, Gln-166, Asp-311, and Lys-338. Gln-166 lines the phosphoenolpyruvate pocket. Asp-311 (proton acceptor) is an active-site residue. Positions 342 and 383 each coordinate phosphoenolpyruvate.

This sequence belongs to the EPSP synthase family. As to quaternary structure, monomer.

The protein resides in the cytoplasm. The catalysed reaction is 3-phosphoshikimate + phosphoenolpyruvate = 5-O-(1-carboxyvinyl)-3-phosphoshikimate + phosphate. The protein operates within metabolic intermediate biosynthesis; chorismate biosynthesis; chorismate from D-erythrose 4-phosphate and phosphoenolpyruvate: step 6/7. Catalyzes the transfer of the enolpyruvyl moiety of phosphoenolpyruvate (PEP) to the 5-hydroxyl of shikimate-3-phosphate (S3P) to produce enolpyruvyl shikimate-3-phosphate and inorganic phosphate. This is 3-phosphoshikimate 1-carboxyvinyltransferase from Campylobacter fetus subsp. fetus (strain 82-40).